A 214-amino-acid chain; its full sequence is Octanoyltransferase (214 aa).

The BPL/LPL catalytic domain occupies 34–214; that stretch reads GVQKELVWLL…KFNEIFSNFN (181 aa). Substrate contacts are provided by residues 73 to 80, 145 to 147, and 158 to 160; these read RGGKYTYH, AFG, and GVS. The active-site Acyl-thioester intermediate is the Cys176.

This sequence belongs to the LipB family.

Its subcellular location is the cytoplasm. It carries out the reaction octanoyl-[ACP] + L-lysyl-[protein] = N(6)-octanoyl-L-lysyl-[protein] + holo-[ACP] + H(+). It participates in protein modification; protein lipoylation via endogenous pathway; protein N(6)-(lipoyl)lysine from octanoyl-[acyl-carrier-protein]: step 1/2. Its function is as follows. Catalyzes the transfer of endogenously produced octanoic acid from octanoyl-acyl-carrier-protein onto the lipoyl domains of lipoate-dependent enzymes. Lipoyl-ACP can also act as a substrate although octanoyl-ACP is likely to be the physiological substrate. The polypeptide is Octanoyltransferase (Ehrlichia chaffeensis (strain ATCC CRL-10679 / Arkansas)).